The chain runs to 966 residues: Leucine--tRNA ligase (966 aa).

Residues 41-51 (PYLNGNLHAGH) carry the 'HIGH' region motif. Positions 632–636 (KMSKS) match the 'KMSKS' region motif. ATP is bound at residue K635.

It belongs to the class-I aminoacyl-tRNA synthetase family.

It localises to the cytoplasm. It carries out the reaction tRNA(Leu) + L-leucine + ATP = L-leucyl-tRNA(Leu) + AMP + diphosphate. In Methanosarcina barkeri (strain Fusaro / DSM 804), this protein is Leucine--tRNA ligase.